The following is a 176-amino-acid chain: Ribosome maturation factor RimM (176 aa).

The PRC barrel domain maps to 100–173 (PEEYYDYQLI…RLRIDPPPGL (74 aa)).

It belongs to the RimM family. Binds ribosomal protein uS19.

The protein localises to the cytoplasm. An accessory protein needed during the final step in the assembly of 30S ribosomal subunit, possibly for assembly of the head region. Essential for efficient processing of 16S rRNA. May be needed both before and after RbfA during the maturation of 16S rRNA. It has affinity for free ribosomal 30S subunits but not for 70S ribosomes. The protein is Ribosome maturation factor RimM of Acidothermus cellulolyticus (strain ATCC 43068 / DSM 8971 / 11B).